The following is a 377-amino-acid chain: MDPEAFTASLFKWDTRAMVPHPNRLLEMVPPPQQPPAAAFAVRPRELCGLEELFQAYGIRYYTAAKIAELGFTVNTLLDMKDEELDEMMNSLSQIFRWDLLVGERYGIKAAVRAERRRLDEEDPRRRQLLSGDNNTNTLDALSQEGFSEEPVQQDKEAAGSGGRGTWEAVAAGERKKQSGRKKGQRKVVDLDGDGEHGGAICERQREHPFIVTEPGEVARGKKNGLDYLFHLYEQCRDFLIQVQSIAKERGEKCPTKVTNQVFRYAKKAGASYINKPKMRHYVHCYALHCLDEDASNALRRAFKERGENVGAWRQACYKPLVAIASRQGWDIDSIFNAHPRLAIWYVPTKLRQLCYAERNSATSSSSVSGTGGHLPF.

Over residues 116–126 (RRRLDEEDPRR) the composition is skewed to basic and acidic residues. The disordered stretch occupies residues 116 to 190 (RRRLDEEDPR…RKKGQRKVVD (75 aa)). Over residues 131–141 (SGDNNTNTLDA) the composition is skewed to polar residues. 3 DNA-binding regions span residues 206 to 210 (REHPF), 275 to 282 (NKPKMRHY), and 346 to 349 (YVPT).

This sequence belongs to the FLO/LFY family. In terms of tissue distribution, in developing inflorescences, leaf primordia and very young leaves.

It is found in the nucleus. Its function is as follows. Probable transcription factor. The sequence is that of Floricaula/leafy homolog (FL) from Populus trichocarpa (Western balsam poplar).